Consider the following 216-residue polypeptide: Uracil phosphoribosyltransferase (216 aa).

5-phospho-alpha-D-ribose 1-diphosphate-binding positions include Arg85, Arg110, and 135–143 (DPMVATGYS). Residues Ile200 and 205–207 (GDA) each bind uracil. Asp206 is a 5-phospho-alpha-D-ribose 1-diphosphate binding site.

This sequence belongs to the UPRTase family. It depends on Mg(2+) as a cofactor.

The enzyme catalyses UMP + diphosphate = 5-phospho-alpha-D-ribose 1-diphosphate + uracil. It functions in the pathway pyrimidine metabolism; UMP biosynthesis via salvage pathway; UMP from uracil: step 1/1. Allosterically activated by GTP. Catalyzes the conversion of uracil and 5-phospho-alpha-D-ribose 1-diphosphate (PRPP) to UMP and diphosphate. This Burkholderia thailandensis (strain ATCC 700388 / DSM 13276 / CCUG 48851 / CIP 106301 / E264) protein is Uracil phosphoribosyltransferase.